The sequence spans 250 residues: Flap endonuclease Xni (250 aa).

D104 is a binding site for Mg(2+). The 5'-3' exonuclease domain maps to 160 to 249 (VQPQQLTDFW…LQGNLQQLRL (90 aa)). Residues L171, A172, P180, V182, and I185 each coordinate K(+). Positions 184–189 (GIGPKS) are interaction with DNA.

It belongs to the Xni family. It depends on Mg(2+) as a cofactor. The cofactor is K(+).

Functionally, has flap endonuclease activity. During DNA replication, flap endonucleases cleave the 5'-overhanging flap structure that is generated by displacement synthesis when DNA polymerase encounters the 5'-end of a downstream Okazaki fragment. The polypeptide is Flap endonuclease Xni (Sodalis glossinidius (strain morsitans)).